A 126-amino-acid polypeptide reads, in one-letter code: Aspartate 1-decarboxylase (126 aa).

Residue serine 25 is the Schiff-base intermediate with substrate; via pyruvic acid of the active site. A Pyruvic acid (Ser) modification is found at serine 25. Threonine 57 is a binding site for substrate. Tyrosine 58 functions as the Proton donor in the catalytic mechanism. Residue 73-75 (GAA) participates in substrate binding.

The protein belongs to the PanD family. In terms of assembly, heterooctamer of four alpha and four beta subunits. Pyruvate serves as cofactor. Is synthesized initially as an inactive proenzyme, which is activated by self-cleavage at a specific serine bond to produce a beta-subunit with a hydroxyl group at its C-terminus and an alpha-subunit with a pyruvoyl group at its N-terminus.

The protein localises to the cytoplasm. The catalysed reaction is L-aspartate + H(+) = beta-alanine + CO2. The protein operates within cofactor biosynthesis; (R)-pantothenate biosynthesis; beta-alanine from L-aspartate: step 1/1. Functionally, catalyzes the pyruvoyl-dependent decarboxylation of aspartate to produce beta-alanine. The sequence is that of Aspartate 1-decarboxylase from Saccharophagus degradans (strain 2-40 / ATCC 43961 / DSM 17024).